A 281-amino-acid polypeptide reads, in one-letter code: Bifunctional protein FolD (281 aa).

NADP(+)-binding positions include 165-167 and Ser190; that span reads GRS.

This sequence belongs to the tetrahydrofolate dehydrogenase/cyclohydrolase family. Homodimer.

It catalyses the reaction (6R)-5,10-methylene-5,6,7,8-tetrahydrofolate + NADP(+) = (6R)-5,10-methenyltetrahydrofolate + NADPH. The catalysed reaction is (6R)-5,10-methenyltetrahydrofolate + H2O = (6R)-10-formyltetrahydrofolate + H(+). Its pathway is one-carbon metabolism; tetrahydrofolate interconversion. Functionally, catalyzes the oxidation of 5,10-methylenetetrahydrofolate to 5,10-methenyltetrahydrofolate and then the hydrolysis of 5,10-methenyltetrahydrofolate to 10-formyltetrahydrofolate. This Polaromonas naphthalenivorans (strain CJ2) protein is Bifunctional protein FolD.